Here is a 198-residue protein sequence, read N- to C-terminus: Ribonuclease HII (198 aa).

One can recognise an RNase H type-2 domain in the interval 2–191 (VLECGVDETG…IRELLVGKDN (190 aa)). Residues Asp8, Glu9, and Asp100 each coordinate a divalent metal cation.

It belongs to the RNase HII family. It depends on Mn(2+) as a cofactor. Mg(2+) serves as cofactor.

The protein localises to the cytoplasm. The enzyme catalyses Endonucleolytic cleavage to 5'-phosphomonoester.. Its function is as follows. Endonuclease that specifically degrades the RNA of RNA-DNA hybrids. This is Ribonuclease HII from Desulforamulus reducens (strain ATCC BAA-1160 / DSM 100696 / MI-1) (Desulfotomaculum reducens).